A 279-amino-acid chain; its full sequence is MAATAAQAVAVKGSVAVPPCGSRGRRRGAVASVRMAAAAATSALRIGRRSPFLGRRLAVGPRRSRPVPRNLVAPVQMNLAFAKATKWWEKGLQPNMREVESAQDLVDSLTNAGDNLVIVDFFSPGCGGCRALHPKICQIAEQNPDVLFLQVNYEEHKSMCYSLHVHVLPFFRFYRGAQGRLCSFSCTNATIKKFRDALAKHKPDRCSLGPTRGLEESELLALAANKDLQFNYTKKPELVPSGDAAAAQELDRGSTKLSPPAKPLVKQGSEERSLVSSGR.

A chloroplast-targeting transit peptide spans 1 to 34; that stretch reads MAATAAQAVAVKGSVAVPPCGSRGRRRGAVASVR. The Thioredoxin domain maps to 61-203; the sequence is PRRSRPVPRN…FRDALAKHKP (143 aa). Residues cysteine 126 and cysteine 129 each act as nucleophile in the active site. A disulfide bond links cysteine 126 and cysteine 129. Residues 242 to 279 are disordered; that stretch reads GDAAAAQELDRGSTKLSPPAKPLVKQGSEERSLVSSGR.

This sequence belongs to the thioredoxin family.

It localises to the plastid. The protein localises to the chloroplast. In terms of biological role, probable thiol-disulfide oxidoreductase that may participate in various redox reactions. This chain is Thioredoxin-like 1-2, chloroplastic, found in Oryza sativa subsp. japonica (Rice).